Reading from the N-terminus, the 284-residue chain is 4-diphosphocytidyl-2-C-methyl-D-erythritol kinase (284 aa).

The active site involves Lys-14. ATP is bound at residue 98 to 108; it reads PMGGGLGGGSS. Residue Asp-140 is part of the active site.

This sequence belongs to the GHMP kinase family. IspE subfamily.

The catalysed reaction is 4-CDP-2-C-methyl-D-erythritol + ATP = 4-CDP-2-C-methyl-D-erythritol 2-phosphate + ADP + H(+). The protein operates within isoprenoid biosynthesis; isopentenyl diphosphate biosynthesis via DXP pathway; isopentenyl diphosphate from 1-deoxy-D-xylulose 5-phosphate: step 3/6. In terms of biological role, catalyzes the phosphorylation of the position 2 hydroxy group of 4-diphosphocytidyl-2C-methyl-D-erythritol. The protein is 4-diphosphocytidyl-2-C-methyl-D-erythritol kinase of Shewanella baltica (strain OS195).